A 64-amino-acid chain; its full sequence is DNA gyrase inhibitor YacG (64 aa).

Residues C9, C12, C28, and C32 each coordinate Zn(2+). The disordered stretch occupies residues 45 to 64; the sequence is KRIPSAGDLSDSDDWSEQQP. Residues 54–64 are compositionally biased toward acidic residues; that stretch reads SDSDDWSEQQP.

The protein belongs to the DNA gyrase inhibitor YacG family. Interacts with GyrB. Zn(2+) serves as cofactor.

Functionally, inhibits all the catalytic activities of DNA gyrase by preventing its interaction with DNA. Acts by binding directly to the C-terminal domain of GyrB, which probably disrupts DNA binding by the gyrase. The chain is DNA gyrase inhibitor YacG from Klebsiella pneumoniae subsp. pneumoniae (strain ATCC 700721 / MGH 78578).